Reading from the N-terminus, the 171-residue chain is 6,7-dimethyl-8-ribityllumazine synthase (171 aa).

5-amino-6-(D-ribitylamino)uracil is bound by residues Phe30, 64–66 (ALE), and 88–90 (AVI). 93–94 (ET) contacts (2S)-2-hydroxy-3-oxobutyl phosphate. Residue His96 is the Proton donor of the active site. A 5-amino-6-(D-ribitylamino)uracil-binding site is contributed by Asn121. Arg135 contacts (2S)-2-hydroxy-3-oxobutyl phosphate.

Belongs to the DMRL synthase family.

The catalysed reaction is (2S)-2-hydroxy-3-oxobutyl phosphate + 5-amino-6-(D-ribitylamino)uracil = 6,7-dimethyl-8-(1-D-ribityl)lumazine + phosphate + 2 H2O + H(+). It functions in the pathway cofactor biosynthesis; riboflavin biosynthesis; riboflavin from 2-hydroxy-3-oxobutyl phosphate and 5-amino-6-(D-ribitylamino)uracil: step 1/2. Functionally, catalyzes the formation of 6,7-dimethyl-8-ribityllumazine by condensation of 5-amino-6-(D-ribitylamino)uracil with 3,4-dihydroxy-2-butanone 4-phosphate. This is the penultimate step in the biosynthesis of riboflavin. This is 6,7-dimethyl-8-ribityllumazine synthase from Polynucleobacter necessarius subsp. necessarius (strain STIR1).